A 328-amino-acid chain; its full sequence is Eukaryotic translation initiation factor 3 subunit I (328 aa).

WD repeat units follow at residues 8–49, 50–89, 145–184, 189–228, and 286–327; these read GHER…GTYE, GHTG…QLYK, TRES…FVES, NSGS…VIKT, and GHFG…FKYT.

It belongs to the eIF-3 subunit I family. Component of the eukaryotic translation initiation factor 3 (eIF-3) complex. The eIF-3 complex appears to include tif32/eif3a, SPAC25G10.08/eif3b, tif33/eif3c, SPBC4C3.07/eif3f, tif35/eif3g and sum1/eif3i. This set of common subunits may also associate exclusively with either moe1/eif3d and int6/eif3e, or with SPAC821.05/eif3h and SPAC1751.03/eif3m. The eIF-3 complex may also include SPAC3A12.13c/eif3j.

It localises to the cytoplasm. It is found in the nucleus. In terms of biological role, component of the eukaryotic translation initiation factor 3 (eIF-3) complex, which is involved in protein synthesis of a specialized repertoire of mRNAs and, together with other initiation factors, stimulates binding of mRNA and methionyl-tRNAi to the 40S ribosome. The eIF-3 complex specifically targets and initiates translation of a subset of mRNAs involved in cell proliferation. The protein is Eukaryotic translation initiation factor 3 subunit I (sum1) of Schizosaccharomyces pombe (strain 972 / ATCC 24843) (Fission yeast).